The chain runs to 92 residues: Small ribosomal subunit protein uS19 (92 aa).

This sequence belongs to the universal ribosomal protein uS19 family.

In terms of biological role, protein S19 forms a complex with S13 that binds strongly to the 16S ribosomal RNA. The protein is Small ribosomal subunit protein uS19 of Nostoc punctiforme (strain ATCC 29133 / PCC 73102).